The chain runs to 407 residues: Na(+)-translocating NADH-quinone reductase subunit F (407 aa).

Residues I3 to F23 form a helical membrane-spanning segment. The 2Fe-2S ferredoxin-type domain maps to G32 to I126. Residues C69, C75, C78, and C110 each contribute to the [2Fe-2S] cluster site. The FAD-binding FR-type domain occupies V129–K269.

Belongs to the NqrF family. As to quaternary structure, composed of six subunits; NqrA, NqrB, NqrC, NqrD, NqrE and NqrF. [2Fe-2S] cluster serves as cofactor. Requires FAD as cofactor.

The protein resides in the cell inner membrane. It carries out the reaction a ubiquinone + n Na(+)(in) + NADH + H(+) = a ubiquinol + n Na(+)(out) + NAD(+). NQR complex catalyzes the reduction of ubiquinone-1 to ubiquinol by two successive reactions, coupled with the transport of Na(+) ions from the cytoplasm to the periplasm. The first step is catalyzed by NqrF, which accepts electrons from NADH and reduces ubiquinone-1 to ubisemiquinone by a one-electron transfer pathway. This chain is Na(+)-translocating NADH-quinone reductase subunit F, found in Yersinia pseudotuberculosis serotype O:1b (strain IP 31758).